We begin with the raw amino-acid sequence, 369 residues long: MSRPPRPTSSSRSNCSGGVFDWEPALRKLDELNARVEDPTLWNDPDEAQAVSRERSRLSAQVEAVHGLERDLADALGYAELADEEGDEASLDEARAQLREIKERAARAELEALLSGEADGNDAYVEINSGAGGTESNDWAGMLLRMYTRWAQAHGMSVDVIEETAGEQAGIKSVTLQVKGTNAYGWLKTEAGVHRLVRISPYDSSARRHTSFASVWVYPVIDDNIEIEINPADVRTDTYRASGAGGQHVNKTDSAVRLTHIPTGIAVACQTQRSQHQNRDQAWKMLRARLYELELEKREAAQQALEDQKTDIGWGHQIRSYVLQPYQMVKDLRTEVETSDTQGVLDGDLDAFMGAALAQRVGATRDAAA.

The residue at position 247 (Gln-247) is an N5-methylglutamine.

This sequence belongs to the prokaryotic/mitochondrial release factor family. Post-translationally, methylated by PrmC. Methylation increases the termination efficiency of RF2.

The protein localises to the cytoplasm. Functionally, peptide chain release factor 2 directs the termination of translation in response to the peptide chain termination codons UGA and UAA. The polypeptide is Peptide chain release factor 2 (Phenylobacterium zucineum (strain HLK1)).